A 92-amino-acid polypeptide reads, in one-letter code: Large ribosomal subunit protein eL43 (92 aa).

The Zn(2+) site is built by C39, C42, C57, and C60.

It belongs to the eukaryotic ribosomal protein eL43 family. In terms of assembly, component of the large ribosomal subunit. Mature ribosomes consist of a small (40S) and a large (60S) subunit. The 40S subunit contains 32 different proteins and 1 molecule of RNA (18S). The 60S subunit contains 45 different proteins and 3 molecules of RNA (25S, 5.8S and 5S). Zn(2+) is required as a cofactor.

The protein localises to the cytoplasm. Functionally, component of the ribosome, a large ribonucleoprotein complex responsible for the synthesis of proteins in the cell. The small ribosomal subunit (SSU) binds messenger RNAs (mRNAs) and translates the encoded message by selecting cognate aminoacyl-transfer RNA (tRNA) molecules. The large subunit (LSU) contains the ribosomal catalytic site termed the peptidyl transferase center (PTC), which catalyzes the formation of peptide bonds, thereby polymerizing the amino acids delivered by tRNAs into a polypeptide chain. The nascent polypeptides leave the ribosome through a tunnel in the LSU and interact with protein factors that function in enzymatic processing, targeting, and the membrane insertion of nascent chains at the exit of the ribosomal tunnel. This is Large ribosomal subunit protein eL43 from Candida albicans (strain SC5314 / ATCC MYA-2876) (Yeast).